Here is a 146-residue protein sequence, read N- to C-terminus: D-aminoacyl-tRNA deacylase (146 aa).

The Gly-cisPro motif, important for rejection of L-amino acids motif lies at 137–138 (GP).

The protein belongs to the DTD family. As to quaternary structure, homodimer.

It is found in the cytoplasm. It catalyses the reaction glycyl-tRNA(Ala) + H2O = tRNA(Ala) + glycine + H(+). It carries out the reaction a D-aminoacyl-tRNA + H2O = a tRNA + a D-alpha-amino acid + H(+). Its function is as follows. An aminoacyl-tRNA editing enzyme that deacylates mischarged D-aminoacyl-tRNAs. Also deacylates mischarged glycyl-tRNA(Ala), protecting cells against glycine mischarging by AlaRS. Acts via tRNA-based rather than protein-based catalysis; rejects L-amino acids rather than detecting D-amino acids in the active site. By recycling D-aminoacyl-tRNA to D-amino acids and free tRNA molecules, this enzyme counteracts the toxicity associated with the formation of D-aminoacyl-tRNA entities in vivo and helps enforce protein L-homochirality. This Acinetobacter baylyi (strain ATCC 33305 / BD413 / ADP1) protein is D-aminoacyl-tRNA deacylase.